Reading from the N-terminus, the 315-residue chain is Methionyl-tRNA formyltransferase (315 aa).

(6S)-5,6,7,8-tetrahydrofolate is bound at residue 113–116; that stretch reads SILP.

The protein belongs to the Fmt family.

It catalyses the reaction L-methionyl-tRNA(fMet) + (6R)-10-formyltetrahydrofolate = N-formyl-L-methionyl-tRNA(fMet) + (6S)-5,6,7,8-tetrahydrofolate + H(+). In terms of biological role, attaches a formyl group to the free amino group of methionyl-tRNA(fMet). The formyl group appears to play a dual role in the initiator identity of N-formylmethionyl-tRNA by promoting its recognition by IF2 and preventing the misappropriation of this tRNA by the elongation apparatus. This Aliivibrio fischeri (strain ATCC 700601 / ES114) (Vibrio fischeri) protein is Methionyl-tRNA formyltransferase.